Here is a 511-residue protein sequence, read N- to C-terminus: Cytochrome P450 monooxygenase prhD (511 aa).

Asn-7 carries N-linked (GlcNAc...) asparagine glycosylation. The chain crosses the membrane as a helical span at residues 10–30 (GNGMGLLIPLGLSWLIWTILL). Cys-444 serves as a coordination point for heme. N-linked (GlcNAc...) asparagine glycosylation is present at Asn-502.

It belongs to the cytochrome P450 family. It depends on heme as a cofactor.

The protein resides in the membrane. It functions in the pathway secondary metabolite biosynthesis; terpenoid biosynthesis. Cytochrome P450 monooxygenase; part of the gene cluster that mediates the biosynthesis of paraherquonin, a meroterpenoid with a unique, highly congested hexacyclic molecular architecture. The first step of the pathway is the synthesis of 3,5-dimethylorsellinic acid (DMOA) by the polyketide synthase prhL. Synthesis of DMOA is followed by farnesylation by the prenyltransferase prhE, methylesterification by the methyl-transferase prhM, epoxidation of the prenyl chain by the flavin-dependent monooxygenase prhF, and cyclization of the farnesyl moiety by the terpene cyclase prhH, to yield the tetracyclic intermediate, protoaustinoid A. The short chain dehydrogenase prhI then oxidizes the C-3 alcohol group of the terpene cyclase product to transform protoaustinoid A into protoaustinoid B. The FAD-binding monooxygenase prhJ catalyzes the oxidation of protoaustinoid B into preaustinoid A which is further oxidized into preaustinoid A1 by FAD-binding monooxygenase phrK. Finally, prhA leads to berkeleydione via the berkeleyone B intermediate. PrhA is a multifunctional dioxygenase that first desaturates at C5-C6 to form berkeleyone B, followed by rearrangement of the A/B-ring to form the cycloheptadiene moiety in berkeleydione. Berkeleydione serves as the key intermediate for the biosynthesis of paraherquonin as well as many other meroterpenoids. The cytochrome P450 monooxygenases prhB, prhD, and prhN, as well as the isomerase prhC, are probably involved in the late stage of paraherquonin biosynthesis, after the production of berkeleydione. Especially prhC might be a multifunctional enzyme that catalyzes the D-ring expansion via intramolecular methoxy rearrangement, as well as the hydrolysis of the expanded D-ring. This is Cytochrome P450 monooxygenase prhD from Penicillium brasilianum.